We begin with the raw amino-acid sequence, 233 residues long: Phosphatidylserine decarboxylase proenzyme (233 aa).

The active-site Schiff-base intermediate with substrate; via pyruvic acid is Ser-201. Ser-201 is modified (pyruvic acid (Ser); by autocatalysis).

Belongs to the phosphatidylserine decarboxylase family. PSD-A subfamily. In terms of assembly, heterodimer of a large membrane-associated beta subunit and a small pyruvoyl-containing alpha subunit. Pyruvate serves as cofactor. Post-translationally, is synthesized initially as an inactive proenzyme. Formation of the active enzyme involves a self-maturation process in which the active site pyruvoyl group is generated from an internal serine residue via an autocatalytic post-translational modification. Two non-identical subunits are generated from the proenzyme in this reaction, and the pyruvate is formed at the N-terminus of the alpha chain, which is derived from the carboxyl end of the proenzyme. The post-translation cleavage follows an unusual pathway, termed non-hydrolytic serinolysis, in which the side chain hydroxyl group of the serine supplies its oxygen atom to form the C-terminus of the beta chain, while the remainder of the serine residue undergoes an oxidative deamination to produce ammonia and the pyruvoyl prosthetic group on the alpha chain.

The protein resides in the cell membrane. It catalyses the reaction a 1,2-diacyl-sn-glycero-3-phospho-L-serine + H(+) = a 1,2-diacyl-sn-glycero-3-phosphoethanolamine + CO2. Its pathway is phospholipid metabolism; phosphatidylethanolamine biosynthesis; phosphatidylethanolamine from CDP-diacylglycerol: step 2/2. Catalyzes the formation of phosphatidylethanolamine (PtdEtn) from phosphatidylserine (PtdSer). The protein is Phosphatidylserine decarboxylase proenzyme of Mycolicibacterium vanbaalenii (strain DSM 7251 / JCM 13017 / BCRC 16820 / KCTC 9966 / NRRL B-24157 / PYR-1) (Mycobacterium vanbaalenii).